Reading from the N-terminus, the 330-residue chain is Ketol-acid reductoisomerase (NADP(+)) (330 aa).

Residues 1–182 (MKKVYYDQDA…GCTRAGVFET (182 aa)) form the KARI N-terminal Rossmann domain. NADP(+) contacts are provided by residues 25 to 28 (YGSQ), serine 51, serine 53, and 83 to 86 (DQIQ). Residue histidine 108 is part of the active site. Glycine 134 contacts NADP(+). The region spanning 183–328 (TFKEETETDL…AELRQMMPWL (146 aa)) is the KARI C-terminal knotted domain. Positions 191, 195, 227, and 231 each coordinate Mg(2+). Serine 252 is a binding site for substrate.

It belongs to the ketol-acid reductoisomerase family. Mg(2+) is required as a cofactor.

The enzyme catalyses (2R)-2,3-dihydroxy-3-methylbutanoate + NADP(+) = (2S)-2-acetolactate + NADPH + H(+). The catalysed reaction is (2R,3R)-2,3-dihydroxy-3-methylpentanoate + NADP(+) = (S)-2-ethyl-2-hydroxy-3-oxobutanoate + NADPH + H(+). It functions in the pathway amino-acid biosynthesis; L-isoleucine biosynthesis; L-isoleucine from 2-oxobutanoate: step 2/4. The protein operates within amino-acid biosynthesis; L-valine biosynthesis; L-valine from pyruvate: step 2/4. Its function is as follows. Involved in the biosynthesis of branched-chain amino acids (BCAA). Catalyzes an alkyl-migration followed by a ketol-acid reduction of (S)-2-acetolactate (S2AL) to yield (R)-2,3-dihydroxy-isovalerate. In the isomerase reaction, S2AL is rearranged via a Mg-dependent methyl migration to produce 3-hydroxy-3-methyl-2-ketobutyrate (HMKB). In the reductase reaction, this 2-ketoacid undergoes a metal-dependent reduction by NADPH to yield (R)-2,3-dihydroxy-isovalerate. This Carboxydothermus hydrogenoformans (strain ATCC BAA-161 / DSM 6008 / Z-2901) protein is Ketol-acid reductoisomerase (NADP(+)).